A 647-amino-acid polypeptide reads, in one-letter code: DNA ligase (647 aa).

Residues Asp-30–Asp-34, Ser-79–Met-80, and Glu-105 contribute to the NAD(+) site. Lys-107 (N6-AMP-lysine intermediate) is an active-site residue. The NAD(+) site is built by Arg-128, Glu-162, and Lys-301. Residues Cys-395, Cys-398, Cys-411, and Cys-416 each coordinate Zn(2+). Residues Lys-570 to Glu-647 form the BRCT domain.

The protein belongs to the NAD-dependent DNA ligase family. LigA subfamily. Requires Mg(2+) as cofactor. Mn(2+) serves as cofactor.

It catalyses the reaction NAD(+) + (deoxyribonucleotide)n-3'-hydroxyl + 5'-phospho-(deoxyribonucleotide)m = (deoxyribonucleotide)n+m + AMP + beta-nicotinamide D-nucleotide.. In terms of biological role, DNA ligase that catalyzes the formation of phosphodiester linkages between 5'-phosphoryl and 3'-hydroxyl groups in double-stranded DNA using NAD as a coenzyme and as the energy source for the reaction. It is essential for DNA replication and repair of damaged DNA. The polypeptide is DNA ligase (Campylobacter jejuni subsp. jejuni serotype O:2 (strain ATCC 700819 / NCTC 11168)).